The chain runs to 239 residues: Ribonuclease PH (239 aa).

Phosphate contacts are provided by residues Arg87 and Gly125 to Arg127.

This sequence belongs to the RNase PH family. As to quaternary structure, homohexameric ring arranged as a trimer of dimers.

It catalyses the reaction tRNA(n+1) + phosphate = tRNA(n) + a ribonucleoside 5'-diphosphate. In terms of biological role, phosphorolytic 3'-5' exoribonuclease that plays an important role in tRNA 3'-end maturation. Removes nucleotide residues following the 3'-CCA terminus of tRNAs; can also add nucleotides to the ends of RNA molecules by using nucleoside diphosphates as substrates, but this may not be physiologically important. Probably plays a role in initiation of 16S rRNA degradation (leading to ribosome degradation) during starvation. The chain is Ribonuclease PH from Azotobacter vinelandii (strain DJ / ATCC BAA-1303).